A 162-amino-acid chain; its full sequence is 2-C-methyl-D-erythritol 2,4-cyclodiphosphate synthase (162 aa).

A divalent metal cation-binding residues include Asp12 and His14. Residues 12 to 14 (DVH) and 38 to 39 (HS) each bind 4-CDP-2-C-methyl-D-erythritol 2-phosphate. Residue His46 participates in a divalent metal cation binding. 4-CDP-2-C-methyl-D-erythritol 2-phosphate contacts are provided by residues 60-62 (DIG), 136-139 (TTTE), Phe143, and Arg146.

Belongs to the IspF family. In terms of assembly, homotrimer. The cofactor is a divalent metal cation.

The catalysed reaction is 4-CDP-2-C-methyl-D-erythritol 2-phosphate = 2-C-methyl-D-erythritol 2,4-cyclic diphosphate + CMP. The protein operates within isoprenoid biosynthesis; isopentenyl diphosphate biosynthesis via DXP pathway; isopentenyl diphosphate from 1-deoxy-D-xylulose 5-phosphate: step 4/6. Functionally, involved in the biosynthesis of isopentenyl diphosphate (IPP) and dimethylallyl diphosphate (DMAPP), two major building blocks of isoprenoid compounds. Catalyzes the conversion of 4-diphosphocytidyl-2-C-methyl-D-erythritol 2-phosphate (CDP-ME2P) to 2-C-methyl-D-erythritol 2,4-cyclodiphosphate (ME-CPP) with a corresponding release of cytidine 5-monophosphate (CMP). The chain is 2-C-methyl-D-erythritol 2,4-cyclodiphosphate synthase from Porphyromonas gingivalis (strain ATCC BAA-308 / W83).